The following is a 35-amino-acid chain: Conotoxin Cal6.1g (35 aa).

Residues 1–8 (GLSRPSKR) constitute a propeptide that is removed on maturation. Cystine bridges form between C9-C25, C16-C29, and C24-C34.

This sequence belongs to the conotoxin O1 superfamily. Expressed by the venom duct.

It is found in the secreted. Its function is as follows. Probable neurotoxin with unknown target. Possibly targets ion channels. This Californiconus californicus (California cone) protein is Conotoxin Cal6.1g.